Here is a 439-residue protein sequence, read N- to C-terminus: Agmatine coumaroyltransferase-1 (439 aa).

Catalysis depends on proton acceptor residues His-152 and Asp-385.

This sequence belongs to the plant acyltransferase family. Monomer.

It catalyses the reaction 4-coumaroyl-CoA + agmatine = N-(4-guanidinobutyl)-4-hydroxycinnamamide + CoA + H(+). Inhibited by DEPC. Completely inhibited by ZnSO(4), strongly inhibited by CuSO(4), partially inhibited by MnCl(2). Unaffected by MgCl(2) or CaCl(2). Involved in the synthesis of hordatines (antifungal hydroxycinnamoylagmatine derivatives). Specific for agmatine as the acyl acceptor, inactive towards tyramine and putrescine. Has activity with the acyl donors 4-coumaroyl-CoA, cinnamoyl-CoA, caffeoyl-CoA, feruloyl-CoA, and to a lesser extent sinapoyl-CoA. The sequence is that of Agmatine coumaroyltransferase-1 (ACT-1) from Hordeum vulgare (Barley).